A 273-amino-acid chain; its full sequence is Coiled-coil domain-containing protein 3 (273 aa).

A signal peptide spans 1–21 (MPLPLLLAALCLAASPAPARA). Residue N100 is glycosylated (N-linked (GlcNAc...) asparagine). A coiled-coil region spans residues 188–250 (SVQKALFEEE…VNQKLNEKLG (63 aa)).

In terms of assembly, homodimer. In terms of processing, N-glycosylated. In terms of tissue distribution, expressed in aorta and adipose tissue. Enriched in mature adipocytes. Over-expressed in adipose tissue from either hormonally-induced or nutritionally-regulated obese mice models.

The protein localises to the secreted. Its function is as follows. Negatively regulates TNF-alpha-induced pro-inflammatory response in endothelial cells (ECs) via inhibition of TNF-alpha-induced NF-kappaB activation in ECs. Positively regulates lipid accumulation in adipose cells. This Mus musculus (Mouse) protein is Coiled-coil domain-containing protein 3 (Ccdc3).